A 348-amino-acid polypeptide reads, in one-letter code: Zinc-type alcohol dehydrogenase-like protein C2E1P3.01 (348 aa).

It belongs to the zinc-containing alcohol dehydrogenase family. Quinone oxidoreductase subfamily.

It is found in the mitochondrion. The chain is Zinc-type alcohol dehydrogenase-like protein C2E1P3.01 from Schizosaccharomyces pombe (strain 972 / ATCC 24843) (Fission yeast).